The chain runs to 212 residues: MNVFRLSGDLSHLAAIIILLLKIWKSRSCAGISGKSQLLFALVFTTRYLDLLTSFISLYNTSMKVIYIGCAYATVYLIYMKFKATYDGNHDTFRVEFLVVPVGGLSVLVNHDFSPLEILWTFSIYLESVAILPQLFMISKTGEAETITTHYLFFLGLYRALYLFNWIWRYSFEGFFDLIAIVAGVVQTILYCDFFYLYVTKVLKGKKLSLPA.

The Lumenal portion of the chain corresponds to 1-4 (MNVF). The chain crosses the membrane as a helical span at residues 5-24 (RLSGDLSHLAAIIILLLKIW). At 25–32 (KSRSCAGI) the chain is on the cytoplasmic side. A helical transmembrane segment spans residues 33–52 (SGKSQLLFALVFTTRYLDLL). Residues 47 to 48 (RY) are interaction with the K-D-E-L motif on target proteins. Over 53-58 (TSFISL) the chain is Lumenal. Residues 59 to 79 (YNTSMKVIYIGCAYATVYLIY) traverse the membrane as a helical segment. Residues 80 to 92 (MKFKATYDGNHDT) lie on the Cytoplasmic side of the membrane. The chain crosses the membrane as a helical span at residues 93 to 110 (FRVEFLVVPVGGLSVLVN). The Lumenal segment spans residues 111-116 (HDFSPL). Residues 117–135 (EILWTFSIYLESVAILPQL) form a helical membrane-spanning segment. Residues 136–149 (FMISKTGEAETITT) are Cytoplasmic-facing. A helical transmembrane segment spans residues 150 to 168 (HYLFFLGLYRALYLFNWIW). Positions 159 to 169 (RALYLFNWIWR) are interaction with the K-D-E-L motif on target proteins. Residues 169–178 (RYSFEGFFDL) are Lumenal-facing. The helical transmembrane segment at 179-199 (IAIVAGVVQTILYCDFFYLYV) threads the bilayer. Residues 200 to 212 (TKVLKGKKLSLPA) are Cytoplasmic-facing. Residues 204-207 (KGKK) form an important for recycling of cargo proteins with the sequence motif K-D-E-L from the Golgi to the endoplasmic reticulum region.

The protein belongs to the ERD2 family.

It localises to the endoplasmic reticulum membrane. The protein localises to the golgi apparatus membrane. It is found in the cytoplasmic vesicle. The protein resides in the COPI-coated vesicle membrane. Receptor for the C-terminal sequence motif K-D-E-L that is present on endoplasmic reticulum resident proteins and that mediates their recycling from the Golgi back to the endoplasmic reticulum. Binding is pH dependent, and is optimal at pH 5-5.4. This chain is ER lumen protein-retaining receptor 2 (kdelr2), found in Xenopus tropicalis (Western clawed frog).